Here is a 111-residue protein sequence, read N- to C-terminus: MAAPVSGRRMAYRASLALTMYCCSTGERLRFAMAPSPSARLINATRLVSIFFPNLCIESMESFRRRANPAAFFDPSLALSMILCACGRLIGLMPSPAMGWFIFPVSSLPSV.

In Acyrthosiphon pisum secondary endosymbiont phage 1 (Bacteriophage APSE-1), this protein is Putative protein p34 (34).